Here is a 273-residue protein sequence, read N- to C-terminus: Large ribosomal subunit protein uL2cz/uL2cy (273 aa).

Disordered stretches follow at residues 1–25 (MAKHLYKTPIPSTRKGTLDRQVKSN) and 225–253 (PVDHPHGGGEGKAPIGRKKPTTPWGYPAL).

It belongs to the universal ribosomal protein uL2 family. As to quaternary structure, part of the 50S ribosomal subunit.

It is found in the plastid. The protein localises to the chloroplast. The protein is Large ribosomal subunit protein uL2cz/uL2cy (rpl2-A) of Triticum aestivum (Wheat).